Consider the following 470-residue polypeptide: Retinoic acid receptor RXR-gamma (470 aa).

Positions 1–145 (MHLATETAPS…NSPGALTKHI (145 aa)) are modulating. NR C4-type zinc fingers lie at residues 146 to 166 (CAICGDRSSGKHYGVYSCEGC) and 182 to 206 (CRDSKDCLIDKRQRNRCQYCRYQKC). The segment at residues 146 to 211 (CAICGDRSSG…RYQKCLAMGM (66 aa)) is a DNA-binding region (nuclear receptor). Positions 212–235 (KREAVQEERQRSREKSDTEAESTS) are hinge. The span at 217–229 (QEERQRSREKSDT) shows a compositional bias: basic and acidic residues. A disordered region spans residues 217–242 (QEERQRSREKSDTEAESTSSTSEEMP). The region spanning 238–466 (SEEMPVERIL…TFLMEMLETP (229 aa)) is the NR LBD domain.

The protein belongs to the nuclear hormone receptor family. NR2 subfamily. As to quaternary structure, homodimer. Heterodimer; with a rar molecule. Binds DNA preferentially as a rar/rxr heterodimer.

The protein resides in the nucleus. Functionally, receptor for retinoic acid. Retinoic acid receptors bind as heterodimers to their target response elements in response to their ligands, all-trans or 9-cis retinoic acid, and regulate gene expression in various biological processes. The rar/rxr heterodimers bind to the retinoic acid response elements (RARE) composed of tandem 5'-AGGTCA-3' sites known as DR1-DR5. The high affinity ligand for rxrs is 9-cis retinoic acid. The polypeptide is Retinoic acid receptor RXR-gamma (rxrg) (Xenopus laevis (African clawed frog)).